Here is a 514-residue protein sequence, read N- to C-terminus: L-carnitine/gamma-butyrobetaine antiporter (514 aa).

Residues 1–11 (MSKDNKKAGIE) lie on the Cytoplasmic side of the membrane. The helical transmembrane segment at 12–30 (PKVFFPPLIIVGILCWLTV) threads the bilayer. The Periplasmic segment spans residues 31–42 (RDLDASNEVINA). A helical transmembrane segment spans residues 43–68 (VFSYVTNVWGWAFEWYMVIMFGGWFW). The Cytoplasmic segment spans residues 69-91 (LVFGRYAKKRLGDEKPEFSTASW). Residues 92-112 (IFMMFASCTSAAVLFWGSIEI) form a helical membrane-spanning segment. The Periplasmic segment spans residues 113-131 (YYYISSPPFGMEGYSAPAK). Residues 132–154 (EIGLAYSLFHWGPLPWATYSFLS) form a helical membrane-spanning segment. Residues 155 to 185 (VAFAYFFFVRKMEVIRPSSTLTPLVGEKHVN) are Cytoplasmic-facing. A helical membrane pass occupies residues 186-216 (GLFGTVVDNFYLVALILAMGTSLGLATPLVT). The Periplasmic portion of the chain corresponds to 217–230 (ECIQYLFGIPHTLQ). A helical membrane pass occupies residues 231–249 (LDAIIISCWILLNAICVAF). Residues 250-251 (GL) lie on the Cytoplasmic side of the membrane. The chain crosses the membrane as a helical span at residues 252-277 (QKGVKIASDVRTYLSFLMLGWVFIVG). Topologically, residues 278 to 311 (GASFIVNYFTDSVGTLLMYMPRMLFYTDPIGKGG) are periplasmic. Residues 312–335 (FPQAWTVFYWAWWVIYAIQMSIFL) form a helical membrane-spanning segment. The Cytoplasmic portion of the chain corresponds to 336-347 (ARISKGRTVREL). The helical transmembrane segment at 348–369 (CLGMVSGLTAGTWLIWTILGGN) threads the bilayer. Residues 370 to 404 (TLQLIDQNILNIPQLIDQYGVPRAIIETWAALPLS) are Periplasmic-facing. The helical transmembrane segment at 405–434 (TATMWGFFILCFIATVTLINACSYTLAMST) threads the bilayer. Topologically, residues 435–445 (CRSMKEGAEPP) are cytoplasmic. Residues 446–464 (LLVRIGWSVLVGIIGIILL) traverse the membrane as a helical segment. At 465–468 (ALGG) the chain is on the periplasmic side. A helical transmembrane segment spans residues 469–492 (LKPIQTAIIAGGCPLFFVNIMVTL). At 493–514 (SFIKDAKVHWKDCSPYTQKMTH) the chain is on the cytoplasmic side.

It belongs to the BCCT transporter (TC 2.A.15) family. CaiT subfamily. As to quaternary structure, homotrimer.

The protein localises to the cell inner membrane. It carries out the reaction 4-(trimethylamino)butanoate(in) + (R)-carnitine(out) = 4-(trimethylamino)butanoate(out) + (R)-carnitine(in). It participates in amine and polyamine metabolism; carnitine metabolism. Functionally, catalyzes the exchange of L-carnitine for gamma-butyrobetaine. In Proteus mirabilis (strain HI4320), this protein is L-carnitine/gamma-butyrobetaine antiporter.